Consider the following 1258-residue polypeptide: uncharacterized protein (1258 aa).

The stretch at 55–93 (ELASEILGVCWQENGVLAAGISEGTWKRFLAGKQAINAE) is one WD 1 repeat. A compositionally biased stretch (basic and acidic residues) spans 112-128 (GGRTKERKDTGTSRQEK). Positions 112–138 (GGRTKERKDTGTSRQEKFLSSSHPHTD) are disordered. WD repeat units follow at residues 640 to 679 (ETLG…LLLI), 682 to 721 (GHSN…CIKT), 724 to 763 (GHEH…CLQT), 766 to 807 (GHTD…RTLK), 809 to 849 (HTGW…KTYI), 850 to 889 (GHTN…CIKT), 892 to 931 (GHTN…CLKA), 934 to 975 (GNTD…SSLE), 976 to 1017 (GHTD…QILL), 1019 to 1059 (HTDW…KTLS), 1060 to 1101 (EHSD…GILR), 1103 to 1143 (HSNR…KTLT), 1144 to 1183 (GHTN…CHHI), and 1186 to 1227 (GHTH…QILR).

This is an uncharacterized protein from Nostoc sp. (strain PCC 7120 / SAG 25.82 / UTEX 2576).